The primary structure comprises 473 residues: Cytochrome P450 716A2 (473 aa).

Residues 1–21 form a helical membrane-spanning segment; the sequence is MYLTIIFLFISSIIFPLLFFL. Cysteine 420 is a binding site for heme.

This sequence belongs to the cytochrome P450 family. The cofactor is heme.

It localises to the membrane. Functionally, possesses triterpene oxidizing activity. Catalyzes the C28 hydroxylation of alpha-amyrin, beta-amyrin, and lupeol, producing uvaol, erythrodiol, and betulin, respectively. Catalyzes the C28 carboxylation of alpha- and beta-amyrin. Possesses 22alpha-hydroxylation activity against alpha- and beta-amaryn. This Arabidopsis thaliana (Mouse-ear cress) protein is Cytochrome P450 716A2.